We begin with the raw amino-acid sequence, 396 residues long: Tryptophan synthase beta chain (396 aa).

K86 carries the N6-(pyridoxal phosphate)lysine modification.

Belongs to the TrpB family. In terms of assembly, tetramer of two alpha and two beta chains. It depends on pyridoxal 5'-phosphate as a cofactor.

The catalysed reaction is (1S,2R)-1-C-(indol-3-yl)glycerol 3-phosphate + L-serine = D-glyceraldehyde 3-phosphate + L-tryptophan + H2O. Its pathway is amino-acid biosynthesis; L-tryptophan biosynthesis; L-tryptophan from chorismate: step 5/5. Its function is as follows. The beta subunit is responsible for the synthesis of L-tryptophan from indole and L-serine. The polypeptide is Tryptophan synthase beta chain (Erwinia tasmaniensis (strain DSM 17950 / CFBP 7177 / CIP 109463 / NCPPB 4357 / Et1/99)).